The following is a 194-amino-acid chain: Cyclin-dependent kinase inhibitor 4 (194 aa).

The span at 49–58 (LELRSRRLEK) shows a compositional bias: basic and acidic residues. Disordered stretches follow at residues 49–70 (LELR…PRRR) and 107–139 (TRET…SHCK).

Belongs to the CDI family. ICK/KRP subfamily.

The chain is Cyclin-dependent kinase inhibitor 4 (KRP4) from Oryza sativa subsp. japonica (Rice).